A 232-amino-acid chain; its full sequence is MAKQGKRIRAVNEGIDRVKLYPLDEALALLKERTTAKFDETIEVALNLGVDPRHADQMVRGVCNLPNGSGRTVRVAVFARGAKADEAKAAGADIVGAEDLLETIQGGTIEFDRCIATPDLMPLVGRLGKVLGPRGLMPNPKVGTVTMDVKGAVAAAKGGAVEFRVEKAGIIHGGIGKASFPADKLAENIRAFVDAVVKAKPAGAKGTYLQRVAVSSTMGPGIKVEPATVHTA.

This sequence belongs to the universal ribosomal protein uL1 family. Part of the 50S ribosomal subunit.

Binds directly to 23S rRNA. The L1 stalk is quite mobile in the ribosome, and is involved in E site tRNA release. Its function is as follows. Protein L1 is also a translational repressor protein, it controls the translation of the L11 operon by binding to its mRNA. The polypeptide is Large ribosomal subunit protein uL1 (Xanthobacter autotrophicus (strain ATCC BAA-1158 / Py2)).